The primary structure comprises 343 residues: Putative mediator of RNA polymerase II transcription subunit 4 (343 aa).

Residues 86-125 (LKKLEKHQKIQKEITEIQKEIEEKDKLISTLALNLKDIES) are a coiled coil. A disordered region spans residues 247–343 (ISSPFSIGGN…DEESEEVEWD (97 aa)). Positions 271-316 (QQQQQQQQQPQQQLSQSQQSQQQTESELQPIQSILQPPQQLNIDLD) are enriched in low complexity. The segment covering 317–343 (LNPDLDSSGDDDDEDDDDEESEEVEWD) has biased composition (acidic residues).

This sequence belongs to the Mediator complex subunit 4 family. Component of the Mediator complex.

It is found in the nucleus. Component of the Mediator complex, a coactivator involved in the regulated transcription of nearly all RNA polymerase II-dependent genes. Mediator functions as a bridge to convey information from gene-specific regulatory proteins to the basal RNA polymerase II transcription machinery. Mediator is recruited to promoters by direct interactions with regulatory proteins and serves as a scaffold for the assembly of a functional preinitiation complex with RNA polymerase II and the general transcription factors. The sequence is that of Putative mediator of RNA polymerase II transcription subunit 4 (med4) from Dictyostelium discoideum (Social amoeba).